Reading from the N-terminus, the 130-residue chain is 3-aminoacrylate deaminase RutC (130 aa).

The protein belongs to the RutC family.

The catalysed reaction is (Z)-3-aminoacrylate + H2O + H(+) = 3-oxopropanoate + NH4(+). Functionally, involved in pyrimidine catabolism. Catalyzes the deamination of 3-aminoacrylate to malonic semialdehyde, a reaction that can also occur spontaneously. RutC may facilitate the reaction and modulate the metabolic fitness, rather than catalyzing essential functions. The chain is 3-aminoacrylate deaminase RutC from Klebsiella pneumoniae (strain 342).